The sequence spans 429 residues: Enolase (429 aa).

Residue Gln-163 participates in (2R)-2-phosphoglycerate binding. Glu-205 (proton donor) is an active-site residue. Mg(2+) contacts are provided by Asp-242, Glu-285, and Asp-312. 4 residues coordinate (2R)-2-phosphoglycerate: Lys-337, Arg-366, Ser-367, and Lys-388. Residue Lys-337 is the Proton acceptor of the active site.

It belongs to the enolase family. Requires Mg(2+) as cofactor.

The protein resides in the cytoplasm. It localises to the secreted. Its subcellular location is the cell surface. The catalysed reaction is (2R)-2-phosphoglycerate = phosphoenolpyruvate + H2O. It participates in carbohydrate degradation; glycolysis; pyruvate from D-glyceraldehyde 3-phosphate: step 4/5. In terms of biological role, catalyzes the reversible conversion of 2-phosphoglycerate (2-PG) into phosphoenolpyruvate (PEP). It is essential for the degradation of carbohydrates via glycolysis. In Methylorubrum extorquens (strain CM4 / NCIMB 13688) (Methylobacterium extorquens), this protein is Enolase.